We begin with the raw amino-acid sequence, 212 residues long: Uridine kinase (212 aa).

13–20 (GGSGSGKT) contacts ATP.

This sequence belongs to the uridine kinase family.

Its subcellular location is the cytoplasm. It catalyses the reaction uridine + ATP = UMP + ADP + H(+). The enzyme catalyses cytidine + ATP = CMP + ADP + H(+). It participates in pyrimidine metabolism; CTP biosynthesis via salvage pathway; CTP from cytidine: step 1/3. It functions in the pathway pyrimidine metabolism; UMP biosynthesis via salvage pathway; UMP from uridine: step 1/1. The polypeptide is Uridine kinase (Bacillus cytotoxicus (strain DSM 22905 / CIP 110041 / 391-98 / NVH 391-98)).